The chain runs to 288 residues: Pantothenate synthetase (288 aa).

Position 27–34 (27–34) interacts with ATP; sequence MGALHEGH. Histidine 34 serves as the catalytic Proton donor. Residues glutamine 58 and glutamine 150 each coordinate (R)-pantoate. Glutamine 58 contacts beta-alanine. Residues leucine 173 and 181-184 each bind ATP; that span reads YSSR.

This sequence belongs to the pantothenate synthetase family. As to quaternary structure, homodimer.

Its subcellular location is the cytoplasm. The enzyme catalyses (R)-pantoate + beta-alanine + ATP = (R)-pantothenate + AMP + diphosphate + H(+). The protein operates within cofactor biosynthesis; (R)-pantothenate biosynthesis; (R)-pantothenate from (R)-pantoate and beta-alanine: step 1/1. Catalyzes the condensation of pantoate with beta-alanine in an ATP-dependent reaction via a pantoyl-adenylate intermediate. In Tropheryma whipplei (strain TW08/27) (Whipple's bacillus), this protein is Pantothenate synthetase.